An 88-amino-acid polypeptide reads, in one-letter code: Large ribosomal subunit protein bL27 (88 aa).

Residues 1-24 (MAHKKGTGSTRNGRDSNSKRLGVK) form a disordered region.

Belongs to the bacterial ribosomal protein bL27 family.

This Prochlorococcus marinus (strain MIT 9313) protein is Large ribosomal subunit protein bL27.